Consider the following 381-residue polypeptide: Creatine kinase M-type (381 aa).

Positions 11–98 (KLNYKSEEEY…FDPIIQDRHG (88 aa)) constitute a Phosphagen kinase N-terminal domain. One can recognise a Phosphagen kinase C-terminal domain in the interval 125–367 (YVLSSRVRTG…KLMVEMEKKL (243 aa)). 128 to 132 (SSRVR) provides a ligand contact to ATP. Ser164 is subject to Phosphoserine. Thr166 carries the post-translational modification Phosphothreonine. Ser178 carries the post-translational modification Phosphoserine. A Phosphothreonine modification is found at Thr180. An ATP-binding site is contributed by His191. Position 199 is a phosphoserine (Ser199). Arg236 and Arg292 together coordinate ATP. Phosphothreonine occurs at positions 313 and 322. Residue 320 to 325 (RGTGGV) coordinates ATP. The residue at position 372 (Ser372) is a Phosphoserine.

This sequence belongs to the ATP:guanido phosphotransferase family. Dimer of identical or non-identical chains, which can be either B (brain type) or M (muscle type). With MM being the major form in skeletal muscle and myocardium, MB existing in myocardium, and BB existing in many tissues, especially brain.

It catalyses the reaction creatine + ATP = N-phosphocreatine + ADP + H(+). Reversibly catalyzes the transfer of phosphate between ATP and various phosphogens (e.g. creatine phosphate). Creatine kinase isoenzymes play a central role in energy transduction in tissues with large, fluctuating energy demands, such as skeletal muscle, heart, brain and spermatozoa. The sequence is that of Creatine kinase M-type (CKM) from Oryctolagus cuniculus (Rabbit).